Here is a 603-residue protein sequence, read N- to C-terminus: DNA mismatch repair protein MutL (603 aa).

It belongs to the DNA mismatch repair MutL/HexB family.

In terms of biological role, this protein is involved in the repair of mismatches in DNA. It is required for dam-dependent methyl-directed DNA mismatch repair. May act as a 'molecular matchmaker', a protein that promotes the formation of a stable complex between two or more DNA-binding proteins in an ATP-dependent manner without itself being part of a final effector complex. The protein is DNA mismatch repair protein MutL of Nitrobacter hamburgensis (strain DSM 10229 / NCIMB 13809 / X14).